The sequence spans 730 residues: uncharacterized protein (730 aa).

A compositionally biased stretch (basic and acidic residues) spans 615-625; that stretch reads FDKENSFDPSD. 2 disordered regions span residues 615–667 and 684–730; these read FDKE…SSFS and KSGS…FGKI. Composition is skewed to low complexity over residues 653 to 667 and 684 to 701; these read SSSS…SSFS and KSGS…NSSS. The span at 713–723 shows a compositional bias: basic residues; it reads KKKKKKKKKKS.

This is an uncharacterized protein from Saccharomyces cerevisiae (strain ATCC 204508 / S288c) (Baker's yeast).